Here is a 393-residue protein sequence, read N- to C-terminus: NAD(P)H-quinone oxidoreductase subunit H, chloroplastic (393 aa).

It belongs to the complex I 49 kDa subunit family. NDH is composed of at least 16 different subunits, 5 of which are encoded in the nucleus.

The protein localises to the plastid. The protein resides in the chloroplast thylakoid membrane. The enzyme catalyses a plastoquinone + NADH + (n+1) H(+)(in) = a plastoquinol + NAD(+) + n H(+)(out). The catalysed reaction is a plastoquinone + NADPH + (n+1) H(+)(in) = a plastoquinol + NADP(+) + n H(+)(out). In terms of biological role, NDH shuttles electrons from NAD(P)H:plastoquinone, via FMN and iron-sulfur (Fe-S) centers, to quinones in the photosynthetic chain and possibly in a chloroplast respiratory chain. The immediate electron acceptor for the enzyme in this species is believed to be plastoquinone. Couples the redox reaction to proton translocation, and thus conserves the redox energy in a proton gradient. This chain is NAD(P)H-quinone oxidoreductase subunit H, chloroplastic, found in Saccharum hybrid (Sugarcane).